The sequence spans 156 residues: Small ribosomal subunit protein uS7 (156 aa).

The protein belongs to the universal ribosomal protein uS7 family. Part of the 30S ribosomal subunit. Contacts proteins S9 and S11.

Functionally, one of the primary rRNA binding proteins, it binds directly to 16S rRNA where it nucleates assembly of the head domain of the 30S subunit. Is located at the subunit interface close to the decoding center, probably blocks exit of the E-site tRNA. The polypeptide is Small ribosomal subunit protein uS7 (Buchnera aphidicola subsp. Cinara cedri (strain Cc)).